The following is a 305-amino-acid chain: MIKQRTIKRIVQATGVGLHTGKKVTLTMRPAAANTGIIYRRTDLNPPVDFPADAKSVRDTMLCTCLVNEHDVRISTVEHLNAALAGLGIDNLVIEVDAAEIPIMDGSAAPFVFLLLDAGIDELKCAKKFLRLKEAVRVEDGDKWAELAPYNGFSLDFTIDFNHPAIDASTQRYSLDFSADAFVRQISRARTFGFMRDIEYLQSRGLCLGGSFDCAIVVDDYRVLNEDGLRFEDEFVRHKMLDAIGDLFMCGHNIIGAFTAFKSGHALNNRLLQTVLAKQEAWELVTFEDGEEMPLAFRAPSAVLA.

Zn(2+) is bound by residues H79, H238, and D242. The Proton donor role is filled by H265.

The protein belongs to the LpxC family. Zn(2+) is required as a cofactor.

The catalysed reaction is a UDP-3-O-[(3R)-3-hydroxyacyl]-N-acetyl-alpha-D-glucosamine + H2O = a UDP-3-O-[(3R)-3-hydroxyacyl]-alpha-D-glucosamine + acetate. It functions in the pathway glycolipid biosynthesis; lipid IV(A) biosynthesis; lipid IV(A) from (3R)-3-hydroxytetradecanoyl-[acyl-carrier-protein] and UDP-N-acetyl-alpha-D-glucosamine: step 2/6. Catalyzes the hydrolysis of UDP-3-O-myristoyl-N-acetylglucosamine to form UDP-3-O-myristoylglucosamine and acetate, the committed step in lipid A biosynthesis. The polypeptide is UDP-3-O-acyl-N-acetylglucosamine deacetylase (Edwardsiella ictaluri (strain 93-146)).